Here is a 231-residue protein sequence, read N- to C-terminus: NADH-ubiquinone oxidoreductase chain 4 (231 aa).

The next 6 membrane-spanning stretches (helical) occupy residues 1-21, 34-54, 61-80, 85-107, 128-148, and 169-189; these read PIAG…YGII, MFLP…LTCL, SLIA…AIII, GLAG…FCLA, ILPM…AIPP, and TIIL…HMFL.

Belongs to the complex I subunit 4 family.

It is found in the mitochondrion membrane. It carries out the reaction a ubiquinone + NADH + 5 H(+)(in) = a ubiquinol + NAD(+) + 4 H(+)(out). Functionally, core subunit of the mitochondrial membrane respiratory chain NADH dehydrogenase (Complex I) that is believed to belong to the minimal assembly required for catalysis. Complex I functions in the transfer of electrons from NADH to the respiratory chain. The immediate electron acceptor for the enzyme is believed to be ubiquinone. This chain is NADH-ubiquinone oxidoreductase chain 4 (MT-ND4), found in Gloydius blomhoffii (Mamushi).